Reading from the N-terminus, the 529-residue chain is Ribonuclease Y (529 aa).

The helical transmembrane segment at 4-24 threads the bilayer; that stretch reads GLIYISLEVIVACLISALAMY. Residues 216–297 form the KH domain; it reads FTNRIALPCS…NRIEEVYHRV (82 aa). The region spanning 342 to 435 is the HD domain; that stretch reads ALQHSKEVAL…VCAADALSAG (94 aa).

Belongs to the RNase Y family.

The protein resides in the cell membrane. Its function is as follows. Endoribonuclease that initiates mRNA decay. The polypeptide is Ribonuclease Y (Helicobacter acinonychis (strain Sheeba)).